Consider the following 127-residue polypeptide: uncharacterized protein (127 aa).

This is an uncharacterized protein from Methanocaldococcus jannaschii (strain ATCC 43067 / DSM 2661 / JAL-1 / JCM 10045 / NBRC 100440) (Methanococcus jannaschii).